A 187-amino-acid polypeptide reads, in one-letter code: Probable chorismate pyruvate-lyase (187 aa).

The substrate site is built by Arg81, Leu119, and Glu178.

The protein belongs to the UbiC family.

It localises to the cytoplasm. The enzyme catalyses chorismate = 4-hydroxybenzoate + pyruvate. It functions in the pathway cofactor biosynthesis; ubiquinone biosynthesis. Its function is as follows. Removes the pyruvyl group from chorismate, with concomitant aromatization of the ring, to provide 4-hydroxybenzoate (4HB) for the ubiquinone pathway. This is Probable chorismate pyruvate-lyase from Thiobacillus denitrificans (strain ATCC 25259 / T1).